The following is a 215-amino-acid chain: Penicillin-binding protein activator LpoB (215 aa).

The signal sequence occupies residues 1 to 19 (MMKMCRYALITALAIFLAG). A lipid anchor (N-palmitoyl cysteine) is attached at Cys20. Cys20 is lipidated: S-diacylglycerol cysteine. The interval 28–78 (APVEEAKPQPQQPAQPQPTVPTVPAVPSVPAQPGPIEHQDQQSGQPAPRVR) is disordered. The span at 37–48 (PQQPAQPQPTVP) shows a compositional bias: pro residues. The span at 49-58 (TVPAVPSVPA) shows a compositional bias: low complexity.

The protein belongs to the LpoB family. Interacts with PBP1b.

It is found in the cell outer membrane. Functionally, regulator of peptidoglycan synthesis that is essential for the function of penicillin-binding protein 1B (PBP1b). The protein is Penicillin-binding protein activator LpoB of Klebsiella pneumoniae subsp. pneumoniae (strain ATCC 700721 / MGH 78578).